We begin with the raw amino-acid sequence, 146 residues long: Kappa-casein (146 aa).

O-linked (GalNAc...) threonine glycans are attached at residues Thr-107, Thr-112, and Thr-118. The residue at position 143 (Ser-143) is a Phosphoserine.

It belongs to the kappa-casein family. As to expression, mammary gland specific. Secreted in milk.

It is found in the secreted. In terms of biological role, kappa-casein stabilizes micelle formation, preventing casein precipitation in milk. This chain is Kappa-casein (CSN3), found in Dicotyles tajacu (Collared peccary).